Consider the following 510-residue polypeptide: ATP synthase subunit alpha (510 aa).

An ATP-binding site is contributed by Gly169–Thr176.

It belongs to the ATPase alpha/beta chains family. In terms of assembly, F-type ATPases have 2 components, CF(1) - the catalytic core - and CF(0) - the membrane proton channel. CF(1) has five subunits: alpha(3), beta(3), gamma(1), delta(1), epsilon(1). CF(0) has three main subunits: a(1), b(2) and c(9-12). The alpha and beta chains form an alternating ring which encloses part of the gamma chain. CF(1) is attached to CF(0) by a central stalk formed by the gamma and epsilon chains, while a peripheral stalk is formed by the delta and b chains.

It is found in the cell inner membrane. It carries out the reaction ATP + H2O + 4 H(+)(in) = ADP + phosphate + 5 H(+)(out). Functionally, produces ATP from ADP in the presence of a proton gradient across the membrane. The alpha chain is a regulatory subunit. The polypeptide is ATP synthase subunit alpha (Rickettsia massiliae (strain Mtu5)).